Reading from the N-terminus, the 357-residue chain is Phosphoserine aminotransferase (357 aa).

L-glutamate is bound at residue R41. Residues 75-76 (GT), W100, T150, D170, and Q193 contribute to the pyridoxal 5'-phosphate site. Position 194 is an N6-(pyridoxal phosphate)lysine (K194). Position 234-235 (234-235 (NT)) interacts with pyridoxal 5'-phosphate.

Belongs to the class-V pyridoxal-phosphate-dependent aminotransferase family. SerC subfamily. Homodimer. The cofactor is pyridoxal 5'-phosphate.

The protein localises to the cytoplasm. The catalysed reaction is O-phospho-L-serine + 2-oxoglutarate = 3-phosphooxypyruvate + L-glutamate. It carries out the reaction 4-(phosphooxy)-L-threonine + 2-oxoglutarate = (R)-3-hydroxy-2-oxo-4-phosphooxybutanoate + L-glutamate. It functions in the pathway amino-acid biosynthesis; L-serine biosynthesis; L-serine from 3-phospho-D-glycerate: step 2/3. Functionally, catalyzes the reversible conversion of 3-phosphohydroxypyruvate to phosphoserine and of 3-hydroxy-2-oxo-4-phosphonooxybutanoate to phosphohydroxythreonine. The chain is Phosphoserine aminotransferase from Lactiplantibacillus plantarum (strain ATCC BAA-793 / NCIMB 8826 / WCFS1) (Lactobacillus plantarum).